The sequence spans 123 residues: uncharacterized protein (123 aa).

Residues 17-117 (SNDNAFLVDV…NNQDKGWKQN (101 aa)) form the Rhodanese domain.

This is an uncharacterized protein from Rickettsia rickettsii.